A 309-amino-acid polypeptide reads, in one-letter code: Aspartate carbamoyltransferase catalytic subunit (309 aa).

Carbamoyl phosphate-binding residues include Arg-55 and Thr-56. Position 85 (Lys-85) interacts with L-aspartate. Positions 106, 135, and 138 each coordinate carbamoyl phosphate. The L-aspartate site is built by Arg-168 and Arg-230. Carbamoyl phosphate-binding residues include Leu-268 and Pro-269.

It belongs to the aspartate/ornithine carbamoyltransferase superfamily. ATCase family. As to quaternary structure, heterododecamer (2C3:3R2) of six catalytic PyrB chains organized as two trimers (C3), and six regulatory PyrI chains organized as three dimers (R2).

The enzyme catalyses carbamoyl phosphate + L-aspartate = N-carbamoyl-L-aspartate + phosphate + H(+). The protein operates within pyrimidine metabolism; UMP biosynthesis via de novo pathway; (S)-dihydroorotate from bicarbonate: step 2/3. Functionally, catalyzes the condensation of carbamoyl phosphate and aspartate to form carbamoyl aspartate and inorganic phosphate, the committed step in the de novo pyrimidine nucleotide biosynthesis pathway. The sequence is that of Aspartate carbamoyltransferase catalytic subunit from Wigglesworthia glossinidia brevipalpis.